We begin with the raw amino-acid sequence, 356 residues long: 1-deoxy-D-xylulose 5-phosphate reductoisomerase (356 aa).

T7, G8, S9, I10, G31, N33, and N111 together coordinate NADPH. K112 contacts 1-deoxy-D-xylulose 5-phosphate. An NADPH-binding site is contributed by E113. A Mn(2+)-binding site is contributed by D131. The 1-deoxy-D-xylulose 5-phosphate site is built by S132, E133, S155, and H178. E133 provides a ligand contact to Mn(2+). Position 184 (G184) interacts with NADPH. Positions 191, 196, 197, and 200 each coordinate 1-deoxy-D-xylulose 5-phosphate. Mn(2+) is bound at residue E200.

This sequence belongs to the DXR family. Mg(2+) serves as cofactor. Requires Mn(2+) as cofactor.

It carries out the reaction 2-C-methyl-D-erythritol 4-phosphate + NADP(+) = 1-deoxy-D-xylulose 5-phosphate + NADPH + H(+). It functions in the pathway isoprenoid biosynthesis; isopentenyl diphosphate biosynthesis via DXP pathway; isopentenyl diphosphate from 1-deoxy-D-xylulose 5-phosphate: step 1/6. In terms of biological role, catalyzes the NADPH-dependent rearrangement and reduction of 1-deoxy-D-xylulose-5-phosphate (DXP) to 2-C-methyl-D-erythritol 4-phosphate (MEP). The chain is 1-deoxy-D-xylulose 5-phosphate reductoisomerase from Campylobacter jejuni subsp. jejuni serotype O:6 (strain 81116 / NCTC 11828).